The sequence spans 352 residues: uncharacterized protein (352 aa).

The N-terminal 55 residues, Met-1–Ser-55, are a transit peptide targeting the chloroplast.

The protein belongs to the methyltransferase superfamily.

Its subcellular location is the plastid. The protein localises to the chloroplast. It localises to the plastoglobule. This is an uncharacterized protein from Arabidopsis thaliana (Mouse-ear cress).